A 601-amino-acid polypeptide reads, in one-letter code: A-type ATP synthase subunit A (601 aa).

Residue 235-242 (GGFGTGKT) participates in ATP binding.

It belongs to the ATPase alpha/beta chains family. In terms of assembly, has multiple subunits with at least A(3), B(3), C, D, E, F, H, I and proteolipid K(x).

Its subcellular location is the cell membrane. The enzyme catalyses ATP + H2O + 4 H(+)(in) = ADP + phosphate + 5 H(+)(out). In terms of biological role, component of the A-type ATP synthase that produces ATP from ADP in the presence of a proton gradient across the membrane. The A chain is the catalytic subunit. The protein is A-type ATP synthase subunit A of Thermofilum pendens (strain DSM 2475 / Hrk 5).